The chain runs to 487 residues: 3-octaprenyl-4-hydroxybenzoate carboxy-lyase (487 aa).

Asn-172 contacts Mn(2+). Residues 175-177 (IYR), 189-191 (RWL), and 194-195 (RG) contribute to the prenylated FMN site. Glu-238 lines the Mn(2+) pocket. The active-site Proton donor is the Asp-287.

The protein belongs to the UbiD family. Homohexamer. Prenylated FMN serves as cofactor. Mn(2+) is required as a cofactor.

It localises to the cell membrane. It carries out the reaction a 4-hydroxy-3-(all-trans-polyprenyl)benzoate + H(+) = a 2-(all-trans-polyprenyl)phenol + CO2. The protein operates within cofactor biosynthesis; ubiquinone biosynthesis. In terms of biological role, catalyzes the decarboxylation of 3-octaprenyl-4-hydroxy benzoate to 2-octaprenylphenol, an intermediate step in ubiquinone biosynthesis. This chain is 3-octaprenyl-4-hydroxybenzoate carboxy-lyase, found in Dechloromonas aromatica (strain RCB).